A 272-amino-acid chain; its full sequence is Acetyl-coenzyme A carboxylase carboxyl transferase subunit alpha (272 aa).

Positions 1-248 (MDKDFMKINV…KKTIVDSLLE (248 aa)) constitute a CoA carboxyltransferase C-terminal domain.

It belongs to the AccA family. As to quaternary structure, acetyl-CoA carboxylase is a heterohexamer composed of biotin carboxyl carrier protein (AccB), biotin carboxylase (AccC) and two subunits each of ACCase subunit alpha (AccA) and ACCase subunit beta (AccD).

The protein localises to the cytoplasm. The catalysed reaction is N(6)-carboxybiotinyl-L-lysyl-[protein] + acetyl-CoA = N(6)-biotinyl-L-lysyl-[protein] + malonyl-CoA. It functions in the pathway lipid metabolism; malonyl-CoA biosynthesis; malonyl-CoA from acetyl-CoA: step 1/1. Component of the acetyl coenzyme A carboxylase (ACC) complex. First, biotin carboxylase catalyzes the carboxylation of biotin on its carrier protein (BCCP) and then the CO(2) group is transferred by the carboxyltransferase to acetyl-CoA to form malonyl-CoA. This Clostridium beijerinckii (strain ATCC 51743 / NCIMB 8052) (Clostridium acetobutylicum) protein is Acetyl-coenzyme A carboxylase carboxyl transferase subunit alpha.